A 328-amino-acid polypeptide reads, in one-letter code: UPF0421 protein SAV1889 (328 aa).

The next 4 membrane-spanning stretches (helical) occupy residues 19 to 39 (IAIF…IYAI), 61 to 81 (LPAT…FGDQ), 108 to 128 (VAVL…IFNF), and 132 to 152 (TLTA…VFPP).

This sequence belongs to the UPF0421 family.

It localises to the cell membrane. The protein is UPF0421 protein SAV1889 of Staphylococcus aureus (strain Mu50 / ATCC 700699).